Consider the following 342-residue polypeptide: Heat-inducible transcription repressor HrcA (342 aa).

It belongs to the HrcA family.

Negative regulator of class I heat shock genes (grpE-dnaK-dnaJ and groELS operons). Prevents heat-shock induction of these operons. This is Heat-inducible transcription repressor HrcA from Leptospira borgpetersenii serovar Hardjo-bovis (strain JB197).